The sequence spans 141 residues: Hemoglobin subunit alpha-1/2 (141 aa).

The Globin domain occupies 1-141; that stretch reads VLSPTDKTNV…VSTVLTSKYR (141 aa). At Ser-3 the chain carries Phosphoserine. Lys-7 carries the N6-succinyllysine modification. Phosphothreonine is present on Thr-8. At Lys-11 the chain carries N6-succinyllysine. At Lys-16 the chain carries N6-acetyllysine; alternate. Lys-16 carries the post-translational modification N6-succinyllysine; alternate. Phosphotyrosine is present on Tyr-24. Position 40 is an N6-succinyllysine (Lys-40). Ser-49 is modified (phosphoserine). His-58 lines the O2 pocket. His-87 contributes to the heme b binding site. Ser-102 bears the Phosphoserine mark. The residue at position 108 (Thr-108) is a Phosphothreonine. Ser-124 bears the Phosphoserine mark. Phosphothreonine is present on residues Thr-134 and Thr-137. Position 138 is a phosphoserine (Ser-138).

This sequence belongs to the globin family. In terms of assembly, heterotetramer of two alpha chains and two beta chains. Red blood cells.

Involved in oxygen transport from the lung to the various peripheral tissues. The polypeptide is Hemoglobin subunit alpha-1/2 (Tapirus terrestris (Lowland tapir)).